The chain runs to 248 residues: Proteasome subunit alpha (248 aa).

It belongs to the peptidase T1A family. As to quaternary structure, the 20S proteasome core is composed of 14 alpha and 14 beta subunits that assemble into four stacked heptameric rings, resulting in a barrel-shaped structure. The two inner rings, each composed of seven catalytic beta subunits, are sandwiched by two outer rings, each composed of seven alpha subunits. The catalytic chamber with the active sites is on the inside of the barrel. Has a gated structure, the ends of the cylinder being occluded by the N-termini of the alpha-subunits. Is capped at one or both ends by the proteasome regulatory ATPase, PAN.

It localises to the cytoplasm. The formation of the proteasomal ATPase PAN-20S proteasome complex, via the docking of the C-termini of PAN into the intersubunit pockets in the alpha-rings, triggers opening of the gate for substrate entry. Interconversion between the open-gate and close-gate conformations leads to a dynamic regulation of the 20S proteasome proteolysis activity. Functionally, component of the proteasome core, a large protease complex with broad specificity involved in protein degradation. The chain is Proteasome subunit alpha from Methanothermobacter thermautotrophicus (strain ATCC 29096 / DSM 1053 / JCM 10044 / NBRC 100330 / Delta H) (Methanobacterium thermoautotrophicum).